Here is a 179-residue protein sequence, read N- to C-terminus: Inner membrane-spanning protein YciB (179 aa).

A run of 5 helical transmembrane segments spans residues 22 to 42 (IYAA…YSWV), 50 to 70 (MALI…FFHN), 76 to 96 (WKVT…QWVM), 121 to 141 (LAWA…AFWL), and 149 to 169 (FKVF…GVYI).

This sequence belongs to the YciB family.

Its subcellular location is the cell inner membrane. In terms of biological role, plays a role in cell envelope biogenesis, maintenance of cell envelope integrity and membrane homeostasis. This chain is Inner membrane-spanning protein YciB, found in Citrobacter koseri (strain ATCC BAA-895 / CDC 4225-83 / SGSC4696).